Here is a 366-residue protein sequence, read N- to C-terminus: Phosphate acyltransferase (366 aa).

Residues 334 to 366 (ESAKNKETQSKQASTKNTAPKTSETTKESQQSL) form a disordered region. Residues 343–366 (SKQASTKNTAPKTSETTKESQQSL) show a composition bias toward polar residues.

Belongs to the PlsX family. Homodimer. Probably interacts with PlsY.

Its subcellular location is the cytoplasm. The enzyme catalyses a fatty acyl-[ACP] + phosphate = an acyl phosphate + holo-[ACP]. It participates in lipid metabolism; phospholipid metabolism. Functionally, catalyzes the reversible formation of acyl-phosphate (acyl-PO(4)) from acyl-[acyl-carrier-protein] (acyl-ACP). This enzyme utilizes acyl-ACP as fatty acyl donor, but not acyl-CoA. This chain is Phosphate acyltransferase, found in Onion yellows phytoplasma (strain OY-M).